A 234-amino-acid polypeptide reads, in one-letter code: Toxic shock syndrome toxin-1 (234 aa).

Positions 1 to 40 are cleaved as a signal peptide; it reads MNKKLLMNFFIVSPLLLATTATDFTPVPLSSNQIIKTAKA.

This sequence belongs to the staphylococcal/streptococcal toxin family.

It localises to the secreted. Responsible for the symptoms of toxic shock syndrome. The sequence is that of Toxic shock syndrome toxin-1 (tst) from Staphylococcus aureus.